Reading from the N-terminus, the 265-residue chain is Diphthine synthase (265 aa).

Residues leucine 10, aspartate 87, valine 90, 115-116 (SI), leucine 166, alanine 209, and histidine 234 contribute to the S-adenosyl-L-methionine site.

Belongs to the diphthine synthase family. As to quaternary structure, homodimer.

The enzyme catalyses 2-[(3S)-amino-3-carboxypropyl]-L-histidyl-[translation elongation factor 2] + 3 S-adenosyl-L-methionine = diphthine-[translation elongation factor 2] + 3 S-adenosyl-L-homocysteine + 3 H(+). It functions in the pathway protein modification; peptidyl-diphthamide biosynthesis. S-adenosyl-L-methionine-dependent methyltransferase that catalyzes the trimethylation of the amino group of the modified target histidine residue in translation elongation factor 2 (EF-2), to form an intermediate called diphthine. The three successive methylation reactions represent the second step of diphthamide biosynthesis. The sequence is that of Diphthine synthase from Pyrococcus horikoshii (strain ATCC 700860 / DSM 12428 / JCM 9974 / NBRC 100139 / OT-3).